We begin with the raw amino-acid sequence, 150 residues long: Small ribosomal subunit protein eS19 (150 aa).

This sequence belongs to the eukaryotic ribosomal protein eS19 family. In terms of assembly, part of the 30S ribosomal subunit.

In terms of biological role, may be involved in maturation of the 30S ribosomal subunit. This is Small ribosomal subunit protein eS19 from Pyrococcus horikoshii (strain ATCC 700860 / DSM 12428 / JCM 9974 / NBRC 100139 / OT-3).